The chain runs to 409 residues: Inactive serine protease 35 (409 aa).

An N-terminal signal peptide occupies residues 1-20 (MENTLLWLVILIPGWALSDG). Residue N90 is glycosylated (N-linked (GlcNAc...) asparagine). Residues 124–404 (VYGTDSRFSI…ICLWIHGNAA (281 aa)) form the Peptidase S1 domain. C154 and C170 are disulfide-bonded. Positions 188–207 (VLKMRNKGGRKKRRGSKRSR) are enriched in basic residues. Residues 188–247 (VLKMRNKGGRKKRRGSKRSRREAESAGQSQAHLRESTTQRPGKKSRRGPRVTQGRPSFQW) are disordered.

Belongs to the peptidase S1 family. As to expression, in ovary, it localizes to the theca cells of pre-antral follicles, the theca and granulosa cells of pre-ovulatory and ovulatory follicles, as well as to the developing corpus luteum.

It is found in the secreted. This is Inactive serine protease 35 (Prss35) from Mus musculus (Mouse).